Consider the following 209-residue polypeptide: Ribonuclease HII (209 aa).

An RNase H type-2 domain is found at 25–209 (RRIAGIDEAG…ATFRGVREYL (185 aa)). Residues Asp31, Glu32, and Asp123 each coordinate a divalent metal cation.

The protein belongs to the RNase HII family. It depends on Mn(2+) as a cofactor. Mg(2+) is required as a cofactor.

The protein resides in the cytoplasm. The enzyme catalyses Endonucleolytic cleavage to 5'-phosphomonoester.. Functionally, endonuclease that specifically degrades the RNA of RNA-DNA hybrids. This chain is Ribonuclease HII, found in Syntrophotalea carbinolica (strain DSM 2380 / NBRC 103641 / GraBd1) (Pelobacter carbinolicus).